The following is an 821-amino-acid chain: MAANGDSPPWSPALAAEGRGSSCEVRRERTPEARIHSVKRYPDLSPGPKGRSSADHAALNSIVSLQASVSFEDVTVDFSKEEWQHLDPAQRRLYWDVTLENYSHLLSVGYQIPKSEAAFKLEQGEGPWMLEGEAPHQSCSGEAIGKMQQQGIPGGIFFHCERFDQPIGEDSLCSILEELWQDNDQLEQRQENQNNLLSHVKVLIKERGYEHKNIEKIIHVTTKLVPSIKRLHNCDTILKHTLNSHNHNRNSATKNLGKIFGNGNNFPHSPSSTKNENAKTGANSCEHDHYEKHLSHKQAPTHHQKIHPEEKLYVCTECVMGFTQKSHLFEHQRIHAGEKSRECDKSNKVFPQKPQVDVHPSVYTGEKPYLCTQCGKVFTLKSNLITHQKIHTGQKPYKCSECGKAFFQRSDLFRHLRIHTGEKPYECSECGKGFSQNSDLSIHQKTHTGEKHYECNECGKAFTRKSALRMHQRIHTGEKPYVCADCGKAFIQKSHFNTHQRIHTGEKPYECSDCGKSFTKKSQLHVHQRIHTGEKPYICTECGKVFTHRTNLTTHQKTHTGEKPYMCAECGKAFTDQSNLIKHQKTHTGEKPYKCNGCGKAFIWKSRLKIHQKSHIGERHYECKDCGKAFIQKSTLSVHQRIHTGEKPYVCPECGKAFIQKSHFIAHHRIHTGEKPYECSDCGKCFTKKSQLRVHQKIHTGEKPNICAECGKAFTDRSNLITHQKIHTREKPYECGDCGKTFTWKSRLNIHQKSHTGERHYECSKCGKAFIQKATLSMHQIIHTGKKPYACTECQKAFTDRSNLIKHQKMHSGEKRYKASD.

A disordered region spans residues Met1–Asp55. The segment covering Glu24–Ile35 has biased composition (basic and acidic residues). The region spanning Val69–Ser140 is the KRAB domain. A Glycyl lysine isopeptide (Lys-Gly) (interchain with G-Cter in SUMO2) cross-link involves residue Lys120. The segment at Tyr313–His335 adopts a C2H2-type 1 zinc-finger fold. The segment at Arg341–Thr364 adopts a C2H2-type 2; degenerate zinc-finger fold. 10 C2H2-type zinc fingers span residues Tyr369–His391, Tyr397–His419, Tyr425–His447, Tyr453–His475, Tyr481–His503, Tyr509–His531, Tyr537–His559, Tyr565–His587, Tyr593–His615, and Tyr621–His643. Residue Lys647 forms a Glycyl lysine isopeptide (Lys-Gly) (interchain with G-Cter in SUMO2) linkage. 6 C2H2-type zinc fingers span residues Tyr649–His671, Tyr677–His699, Asn705–His727, Tyr733–His755, Tyr761–His783, and Tyr789–His811.

The protein belongs to the krueppel C2H2-type zinc-finger protein family. Expressed in the heart, brain, placenta, lung, liver, skeletal muscle, kidney and pancreas.

It localises to the nucleus. Its function is as follows. May be involved in transcriptional regulation. This chain is Zinc finger protein 41 (ZNF41), found in Homo sapiens (Human).